Here is a 293-residue protein sequence, read N- to C-terminus: Caspase-6 (293 aa).

Positions 1–20 (MSSEPPPRRARGPGEEQNMT) are disordered. Positions 1–23 (MSSEPPPRRARGPGEEQNMTEID) are excised as a propeptide. Positions 42-44 (KRR) are tri-arginine exosite. Ser-79 is subject to Phosphoserine. His-121 is a catalytic residue. The 130's region stretch occupies residues 125-142 (NHIYAYDAKIEIQTLTGL). The active site involves Cys-163. A propeptide spanning residues 180–193 (HRTDTPDANLTQVD) is cleaved from the precursor. Ser-257 bears the Phosphoserine mark. 2 S-palmitoyl cysteine lipidation sites follow: Cys-264 and Cys-277.

This sequence belongs to the peptidase C14A family. In terms of assembly, heterotetramer that consists of two anti-parallel arranged heterodimers, each one formed by a 18 kDa (p18) and a 11 kDa (p11) subunits. Interacts with BIRC6/bruce. Interacts with RIPK3. Heterotetramer that consists of two anti-parallel arranged heterodimers, each one formed by a 18 kDa (Caspase-6 subunit p18) and a 11 kDa (Caspase-6 subunit p11) subunit. In terms of processing, phosphorylated by NUAK1; phosphorylation inhibits self-activation. Phosphorylation at Ser-257 by AMP-activated protein kinase (PRKAA1 or PRKAA2) inhibits autocleavage, preventing caspase activation, thereby preventing hepatocyte apoptosis. Post-translationally, palmitoylation by ZDHHC17 blocks dimerization and subsequent activation, leading to inhibit the cysteine protease activity. Can be cleaved and activated by different caspases, depending on the context. Cleaved and activated by caspase-8 (CASP8) and subsequently by caspase-3 (CASP3). Can also undergo autoactivation by mediating autocleavage at Asp-179 and Asp-193, while it is not able to cleave its N-terminal disordered prodomain. Cleaved and activated by CASP1, possibly in the context of inflammation.

Its subcellular location is the cytoplasm. The protein localises to the nucleus. It catalyses the reaction Strict requirement for Asp at position P1 and has a preferred cleavage sequence of Val-Glu-His-Asp-|-.. Its activity is regulated as follows. During activation, the N-terminal disordered prodomain is removed by cleavage. Concomitantly, double cleavage gives rise to a large 18-kDa and a small 11-kDa subunit. The two large and two small subunits then assemble to form the active CASP6 complex. Can be cleaved and activated by different caspases, depending on the context. Cleaved and activated by caspase-8 (CASP8) and subsequently by caspase-3 (CASP3). Can also undergo autoactivation by mediating autocleavage at Asp-179 and Asp-193, while it is not able to cleave its N-terminal disordered prodomain. Intramolecular cleavage at Asp-193 is a prerequisite for CASP6 self-activation. Cleaved and activated by CASP1 in neurons, possibly in the context of inflammation. Phosphorylation at Ser-257 inhibits autocleavage, preventing caspase activation. Functionally, cysteine protease that plays essential roles in programmed cell death, axonal degeneration, development and innate immunity. Acts as a non-canonical executioner caspase during apoptosis: localizes in the nucleus and cleaves the nuclear structural protein NUMA1 and lamin A/LMNA thereby inducing nuclear shrinkage and fragmentation. Lamin-A/LMNA cleavage is required for chromatin condensation and nuclear disassembly during apoptotic execution. Acts as a regulator of liver damage by promoting hepatocyte apoptosis: in absence of phosphorylation by AMP-activated protein kinase (AMPK), catalyzes cleavage of BID, leading to cytochrome c release, thereby participating in nonalcoholic steatohepatitis. Cleaves PARK7/DJ-1 in cells undergoing apoptosis. Involved in intrinsic apoptosis by mediating cleavage of RIPK1. Furthermore, cleaves many transcription factors such as NF-kappa-B and cAMP response element-binding protein/CREBBP. Cleaves phospholipid scramblase proteins XKR4 and XKR9. In addition to apoptosis, involved in different forms of programmed cell death. Plays an essential role in defense against viruses by acting as a central mediator of the ZBP1-mediated pyroptosis, apoptosis, and necroptosis (PANoptosis), independently of its cysteine protease activity. PANoptosis is a unique inflammatory programmed cell death, which provides a molecular scaffold that allows the interactions and activation of machinery required for inflammasome/pyroptosis, apoptosis and necroptosis. Mechanistically, interacts with RIPK3 and enhances the interaction between RIPK3 and ZBP1, leading to ZBP1-mediated inflammasome activation and cell death. Plays an essential role in axon degeneration during axon pruning which is the remodeling of axons during neurogenesis but not apoptosis. Regulates B-cell programs both during early development and after antigen stimulation. This Bos taurus (Bovine) protein is Caspase-6.